We begin with the raw amino-acid sequence, 366 residues long: Mitogen-activated protein kinase p38a (366 aa).

The Protein kinase domain maps to 25–312 (YQDLQPVGSG…AEEALSHPYL (288 aa)). ATP contacts are provided by residues 31-39 (VGSGAYGQV) and lysine 54. Aspartate 154 acts as the Proton acceptor in catalysis. Residue threonine 184 is modified to Phosphothreonine. Residues 184–186 (TGY) carry the TXY motif. Tyrosine 186 is modified (phosphotyrosine).

The protein belongs to the protein kinase superfamily. CMGC Ser/Thr protein kinase family. MAP kinase subfamily. Requires Mg(2+) as cofactor. Dually phosphorylated on Thr-184 and Tyr-186, which activates the enzyme.

Its subcellular location is the nucleus. It catalyses the reaction L-seryl-[protein] + ATP = O-phospho-L-seryl-[protein] + ADP + H(+). It carries out the reaction L-threonyl-[protein] + ATP = O-phospho-L-threonyl-[protein] + ADP + H(+). Its activity is regulated as follows. Activated by threonine and tyrosine phosphorylation by Mkk3 in response to environmental stress. Kinase involved in a signal transduction pathway. May down-regulate insect immunity gene expression after prolonged infection. The chain is Mitogen-activated protein kinase p38a from Drosophila melanogaster (Fruit fly).